The sequence spans 217 residues: Adr-2-binding protein 1 (217 aa).

The disordered stretch occupies residues 33–65 (ARPEPQHDSLKRRNTTSSIAKKKAKMTRGDEQI). Positions 44–58 (RRNTTSSIAKKKAKM) are enriched in basic residues.

Interacts with double-stranded RNA-specific adenosine deaminase adr-2. As to expression, expressed in main body hypodermal cells, the hypodermal seam cells, pharynx, intestine and some neurons.

The protein resides in the nucleus. In terms of biological role, required for the A-I editing activity of the double-stranded RNA-specific adenosine deaminase adr-2 by facilitating adr-2 nuclear localization. In Caenorhabditis elegans, this protein is Adr-2-binding protein 1.